The chain runs to 214 residues: Protein FAM167A (214 aa).

Disordered stretches follow at residues 1–26 (MSVP…PDDH) and 59–108 (PFPR…LSTG). Residues 118-156 (EAIAWLRKELTEMRLQDQQLARQLMRLRGDINKLKIEHT) adopt a coiled-coil conformation.

This sequence belongs to the FAM167 (SEC) family. As to expression, expressed in skin, including primary keratinocytes, spleen, kidney, leukocytes, testis, lung, small intestine and prostate.

This Homo sapiens (Human) protein is Protein FAM167A (FAM167A).